Reading from the N-terminus, the 398-residue chain is Subtilisin-like protease CPC735_050320 (398 aa).

The signal sequence occupies residues 1 to 19; the sequence is MVFLGKILPLALAALSVNG. A propeptide spanning residues 20-117 is cleaved from the precursor; sequence AEILSAPGAE…IERDQIMKAS (98 aa). The Inhibitor I9 domain maps to 35–115; sequence YIVVMKEGTS…AYIERDQIMK (81 aa). One can recognise a Peptidase S8 domain in the interval 127–398; sequence SWGLARVSSR…NRLINNGVSQ (272 aa). Active-site charge relay system residues include D159 and H190. N-linked (GlcNAc...) asparagine glycans are attached at residues N220 and N250. S344 (charge relay system) is an active-site residue.

Belongs to the peptidase S8 family.

The protein localises to the secreted. Functionally, secreted subtilisin-like serine protease with keratinolytic activity that contributes to pathogenicity. The sequence is that of Subtilisin-like protease CPC735_050320 from Coccidioides posadasii (strain C735) (Valley fever fungus).